A 355-amino-acid chain; its full sequence is Protein RecA (355 aa).

65–72 (GPESSGKT) contacts ATP.

This sequence belongs to the RecA family.

It localises to the cytoplasm. Its function is as follows. Can catalyze the hydrolysis of ATP in the presence of single-stranded DNA, the ATP-dependent uptake of single-stranded DNA by duplex DNA, and the ATP-dependent hybridization of homologous single-stranded DNAs. It interacts with LexA causing its activation and leading to its autocatalytic cleavage. In Pseudomonas putida (strain GB-1), this protein is Protein RecA.